The primary structure comprises 545 residues: Phenylalanine--tRNA ligase beta subunit (545 aa).

A B5 domain is found at Phe-268 to Pro-343. Asp-321, Asp-327, Glu-330, and Asp-331 together coordinate Mg(2+).

The protein belongs to the phenylalanyl-tRNA synthetase beta subunit family. Type 2 subfamily. In terms of assembly, tetramer of two alpha and two beta subunits. It depends on Mg(2+) as a cofactor.

It is found in the cytoplasm. The catalysed reaction is tRNA(Phe) + L-phenylalanine + ATP = L-phenylalanyl-tRNA(Phe) + AMP + diphosphate + H(+). This Saccharolobus islandicus (strain L.S.2.15 / Lassen #1) (Sulfolobus islandicus) protein is Phenylalanine--tRNA ligase beta subunit.